A 338-amino-acid polypeptide reads, in one-letter code: D-erythrose-4-phosphate dehydrogenase (338 aa).

12 to 13 (RI) lines the NAD(+) pocket. Substrate is bound by residues 154–156 (SCT), R200, 213–214 (TK), and R236. C155 serves as the catalytic Nucleophile. Position 318 (N318) interacts with NAD(+).

It belongs to the glyceraldehyde-3-phosphate dehydrogenase family. Epd subfamily. In terms of assembly, homotetramer.

It is found in the cytoplasm. It catalyses the reaction D-erythrose 4-phosphate + NAD(+) + H2O = 4-phospho-D-erythronate + NADH + 2 H(+). It functions in the pathway cofactor biosynthesis; pyridoxine 5'-phosphate biosynthesis; pyridoxine 5'-phosphate from D-erythrose 4-phosphate: step 1/5. Its function is as follows. Catalyzes the NAD-dependent conversion of D-erythrose 4-phosphate to 4-phosphoerythronate. This chain is D-erythrose-4-phosphate dehydrogenase, found in Yersinia enterocolitica serotype O:8 / biotype 1B (strain NCTC 13174 / 8081).